The following is a 90-amino-acid chain: Envelope protein US9 (90 aa).

Topologically, residues 1-67 (MTSRLSDPNS…RRRRTRCVGM (67 aa)) are intravirion. The Internalization motif motif lies at 21-24 (YPTA). Residues 30–39 (EAYYSESEDE) are acidic. Phosphoserine; by host CK2 occurs at positions 34 and 36. Residues 68-88 (VIACLLVAVLSGGFGALLMWL) form a helical; Signal-anchor for type II membrane protein membrane-spanning segment. Residues 89 to 90 (LR) lie on the Virion surface side of the membrane.

It belongs to the alphaherpesvirinae envelope protein US9 family. Phosphorylated on serines within the acidic cluster, possibly by host CK2. Phosphorylation determines whether endocytosed viral US9 traffics to the trans-Golgi network or recycles to the cell membrane.

It is found in the virion membrane. The protein localises to the host Golgi apparatus membrane. Its subcellular location is the host smooth endoplasmic reticulum membrane. It localises to the host cell membrane. Functionally, essential for the anterograde spread of the infection throughout the host nervous system. Together with the gE/gI heterodimer, US9 is involved in the sorting and transport of viral structural components toward axon tips. This chain is Envelope protein US9, found in Homo sapiens (Human).